We begin with the raw amino-acid sequence, 263 residues long: MIFMIITIASGKGGVGKTTTSASLAVALAKLGKKVLAIDGDISMANLGILFNMEKKKPSLHEVLSEEADVRDAIYKHKTGVYVLPTSLSLEGYKKSDIDLLPDVVNEVADDFDYVIIDAPAGLNREMATHLAIADKLLLVVTPEMFSIIDAVRLKESAEMAGTPLMGVVLNRVGRDFGEMGRDEIEMLIKGKVLVEVPEDENVRSAALKKMSVIEYRKNSPASQAYMKLASIIAGVPIYIEDEIKIIRKESFIDKIKRLFRMY.

ATP is bound at residue K12–T19.

The protein belongs to the ParA family. MinD subfamily.

This is an uncharacterized protein from Methanocaldococcus jannaschii (strain ATCC 43067 / DSM 2661 / JAL-1 / JCM 10045 / NBRC 100440) (Methanococcus jannaschii).